The sequence spans 81 residues: Acyl carrier protein (81 aa).

One can recognise a Carrier domain in the interval 1–79; the sequence is MDVAAMQVKI…DIFDYLAKNK (79 aa). The residue at position 39 (Ser-39) is an O-(pantetheine 4'-phosphoryl)serine.

Belongs to the acyl carrier protein (ACP) family. 4'-phosphopantetheine is transferred from CoA to a specific serine of apo-ACP by AcpS. This modification is essential for activity because fatty acids are bound in thioester linkage to the sulfhydryl of the prosthetic group.

It localises to the cytoplasm. The protein operates within lipid metabolism; fatty acid biosynthesis. Functionally, carrier of the growing fatty acid chain in fatty acid biosynthesis. The polypeptide is Acyl carrier protein (Syntrophobacter fumaroxidans (strain DSM 10017 / MPOB)).